A 290-amino-acid polypeptide reads, in one-letter code: ANSNSRPHLLQTQKPFSVVLAISITFYLLLLNKVNSEEALSFTFTKFVSNQDELLLQGDALVSSKGELQLTRVENGQPIPHSVGRALYSDPVHIWDSSTGSVASFVTSFTFVVEAPNENKTADGIAFFLAPPDTQVQSLGGFLGLFNSSVYNSSNQILAVEFDTFSNSWDPTARHIGIDVNSIESTRTATWGWRNGEVAIVLITYVAPAETLIASLTYPSSQTSYILSAAVDLKSILPEWVRVGFSAATGRSAGYVETHDVLSWSFTSTLETGNSGAKQNNAHLASYALI.

Positions 1-36 (ANSNSRPHLLQTQKPFSVVLAISITFYLLLLNKVNS) are cleaved as a signal peptide. N-linked (GlcNAc...) asparagine glycosylation is found at Asn119, Asn147, and Asn152. Residues Glu161 and Asp163 each contribute to the Mn(2+) site. Ca(2+) contacts are provided by Asp163, Asn167, and Asp170. Mn(2+) is bound by residues Asp170 and His175.

The protein belongs to the leguminous lectin family. In terms of assembly, homotetramer.

Its function is as follows. Does not have any carbohydrate binding or agglutination activity. The protein is Lectin-related protein of Cladrastis kentukea (Yellow wood).